The following is a 79-amino-acid chain: uncharacterized protein (79 aa).

Residues M1 to D37 are disordered.

This is an uncharacterized protein from Bacillus subtilis (strain 168).